Here is a 299-residue protein sequence, read N- to C-terminus: KATNB1-like protein 1 (299 aa).

The Nuclear localization signal signature appears at 8–15 (VKKRNFSN). Phosphoserine is present on Ser-56.

In terms of assembly, interacts with KATNA1 and KATNAL1; these interactions are competed by KATNB1 which has a higher affinity for them.

The protein resides in the nucleus. It localises to the cytoplasm. Its subcellular location is the cytoskeleton. The protein localises to the spindle pole. In terms of biological role, regulates microtubule-severing activity of KATNAL1 in a concentration-dependent manner in vitro. This chain is KATNB1-like protein 1 (Katnbl1), found in Mus musculus (Mouse).